The following is a 346-amino-acid chain: Very-long-chain 3-oxoacyl-CoA reductase (346 aa).

A helical transmembrane segment spans residues 19–39; the sequence is VLLGALLVGVFKLTVFILSVT. Positions 65, 119, 146, 220, 224, 253, and 255 each coordinate NADP(+). Residue Tyr220 is the Proton donor of the active site. Lys224 (lowers pKa of active site Tyr) is an active-site residue.

It belongs to the short-chain dehydrogenases/reductases (SDR) family.

Its subcellular location is the endoplasmic reticulum membrane. The enzyme catalyses a very-long-chain (3R)-3-hydroxyacyl-CoA + NADP(+) = a very-long-chain 3-oxoacyl-CoA + NADPH + H(+). It participates in lipid metabolism; fatty acid biosynthesis. Component of the microsomal membrane bound fatty acid elongation system, which produces the 26-carbon very long-chain fatty acids (VLCFA) from palmitate. Catalyzes the reduction of the 3-ketoacyl-CoA intermediate that is formed in each cycle of fatty acid elongation. VLCFAs serve as precursors for ceramide and sphingolipids. This is Very-long-chain 3-oxoacyl-CoA reductase from Scheffersomyces stipitis (strain ATCC 58785 / CBS 6054 / NBRC 10063 / NRRL Y-11545) (Yeast).